Reading from the N-terminus, the 218-residue chain is Carboxylesterase 2 (218 aa).

Active-site charge relay system residues include Ser114, Asp168, and His199.

Belongs to the AB hydrolase superfamily. AB hydrolase 2 family. Homodimer.

The enzyme catalyses a carboxylic ester + H2O = an alcohol + a carboxylate + H(+). In terms of biological role, hydrolyzes carboxylic ester bonds with relatively broad substrate specificity. This chain is Carboxylesterase 2 (estB), found in Pseudomonas fluorescens.